Here is a 337-residue protein sequence, read N- to C-terminus: Nucleoid-associated protein Avin_11450 (337 aa).

It belongs to the YejK family.

It localises to the cytoplasm. It is found in the nucleoid. The polypeptide is Nucleoid-associated protein Avin_11450 (Azotobacter vinelandii (strain DJ / ATCC BAA-1303)).